A 383-amino-acid polypeptide reads, in one-letter code: uncharacterized protein (383 aa).

The protein belongs to the peptidase M20 family.

This is an uncharacterized protein from Staphylococcus haemolyticus (strain JCSC1435).